Consider the following 363-residue polypeptide: 3-isopropylmalate dehydrogenase (363 aa).

79–92 (GPKWEHLPPNDQPE) is a binding site for NAD(+). Residues arginine 100, arginine 110, arginine 139, and aspartate 228 each contribute to the substrate site. Mg(2+) is bound by residues aspartate 228, aspartate 252, and aspartate 256. 286–298 (GSAPDIAGKNIAN) serves as a coordination point for NAD(+).

The protein belongs to the isocitrate and isopropylmalate dehydrogenases family. LeuB type 1 subfamily. Homodimer. Requires Mg(2+) as cofactor. The cofactor is Mn(2+).

It localises to the cytoplasm. The catalysed reaction is (2R,3S)-3-isopropylmalate + NAD(+) = 4-methyl-2-oxopentanoate + CO2 + NADH. Its pathway is amino-acid biosynthesis; L-leucine biosynthesis; L-leucine from 3-methyl-2-oxobutanoate: step 3/4. Catalyzes the oxidation of 3-carboxy-2-hydroxy-4-methylpentanoate (3-isopropylmalate) to 3-carboxy-4-methyl-2-oxopentanoate. The product decarboxylates to 4-methyl-2 oxopentanoate. The protein is 3-isopropylmalate dehydrogenase of Vibrio vulnificus (strain YJ016).